A 157-amino-acid polypeptide reads, in one-letter code: 6,7-dimethyl-8-ribityllumazine synthase 2 (157 aa).

5-amino-6-(D-ribitylamino)uracil is bound by residues tryptophan 21, 55–57 (AYE), and 79–81 (FVV). The active-site Proton donor is the arginine 87. Residue serine 112 coordinates 5-amino-6-(D-ribitylamino)uracil. Position 126 (histidine 126) interacts with (2S)-2-hydroxy-3-oxobutyl phosphate.

Belongs to the DMRL synthase family. Homodecamer, arranged as a dimer of pentamers.

It catalyses the reaction (2S)-2-hydroxy-3-oxobutyl phosphate + 5-amino-6-(D-ribitylamino)uracil = 6,7-dimethyl-8-(1-D-ribityl)lumazine + phosphate + 2 H2O + H(+). It participates in cofactor biosynthesis; riboflavin biosynthesis; riboflavin from 2-hydroxy-3-oxobutyl phosphate and 5-amino-6-(D-ribitylamino)uracil: step 1/2. Its function is as follows. Catalyzes the formation of 6,7-dimethyl-8-ribityllumazine by condensation of 5-amino-6-(D-ribitylamino)uracil with 3,4-dihydroxy-2-butanone 4-phosphate. This is the penultimate step in the biosynthesis of riboflavin. The polypeptide is 6,7-dimethyl-8-ribityllumazine synthase 2 (ribH2) (Mesorhizobium japonicum (strain LMG 29417 / CECT 9101 / MAFF 303099) (Mesorhizobium loti (strain MAFF 303099))).